The primary structure comprises 309 residues: Homoserine kinase (309 aa).

88 to 98 (PLARGLGSSAA) provides a ligand contact to ATP.

Belongs to the GHMP kinase family. Homoserine kinase subfamily.

Its subcellular location is the cytoplasm. It carries out the reaction L-homoserine + ATP = O-phospho-L-homoserine + ADP + H(+). The protein operates within amino-acid biosynthesis; L-threonine biosynthesis; L-threonine from L-aspartate: step 4/5. Its function is as follows. Catalyzes the ATP-dependent phosphorylation of L-homoserine to L-homoserine phosphate. The protein is Homoserine kinase of Halalkalibacterium halodurans (strain ATCC BAA-125 / DSM 18197 / FERM 7344 / JCM 9153 / C-125) (Bacillus halodurans).